Here is a 284-residue protein sequence, read N- to C-terminus: Putative L-ribulose-5-phosphate 3-epimerase UlaE (284 aa).

Belongs to the L-ribulose-5-phosphate 3-epimerase family.

The enzyme catalyses L-ribulose 5-phosphate = L-xylulose 5-phosphate. It participates in cofactor degradation; L-ascorbate degradation; D-xylulose 5-phosphate from L-ascorbate: step 3/4. In terms of biological role, catalyzes the isomerization of L-xylulose-5-phosphate to L-ribulose-5-phosphate. Is involved in the anaerobic L-ascorbate utilization. This is Putative L-ribulose-5-phosphate 3-epimerase UlaE from Shigella dysenteriae serotype 1 (strain Sd197).